The chain runs to 219 residues: Ribose-5-phosphate isomerase A (219 aa).

Residues 28–31, 81–84, and 94–97 contribute to the substrate site; these read SGST, DGAD, and KGGG. Glu-103 serves as the catalytic Proton acceptor. Residue Lys-121 participates in substrate binding.

Belongs to the ribose 5-phosphate isomerase family. In terms of assembly, homodimer.

It carries out the reaction aldehydo-D-ribose 5-phosphate = D-ribulose 5-phosphate. Its pathway is carbohydrate degradation; pentose phosphate pathway; D-ribose 5-phosphate from D-ribulose 5-phosphate (non-oxidative stage): step 1/1. Its function is as follows. Catalyzes the reversible conversion of ribose-5-phosphate to ribulose 5-phosphate. This is Ribose-5-phosphate isomerase A from Pasteurella multocida (strain Pm70).